Consider the following 157-residue polypeptide: SsrA-binding protein (157 aa).

Belongs to the SmpB family.

It localises to the cytoplasm. Required for rescue of stalled ribosomes mediated by trans-translation. Binds to transfer-messenger RNA (tmRNA), required for stable association of tmRNA with ribosomes. tmRNA and SmpB together mimic tRNA shape, replacing the anticodon stem-loop with SmpB. tmRNA is encoded by the ssrA gene; the 2 termini fold to resemble tRNA(Ala) and it encodes a 'tag peptide', a short internal open reading frame. During trans-translation Ala-aminoacylated tmRNA acts like a tRNA, entering the A-site of stalled ribosomes, displacing the stalled mRNA. The ribosome then switches to translate the ORF on the tmRNA; the nascent peptide is terminated with the 'tag peptide' encoded by the tmRNA and targeted for degradation. The ribosome is freed to recommence translation, which seems to be the essential function of trans-translation. This is SsrA-binding protein from Chlorobaculum tepidum (strain ATCC 49652 / DSM 12025 / NBRC 103806 / TLS) (Chlorobium tepidum).